The chain runs to 961 residues: Gamma-tubulin small complex component GCP2 (961 aa).

A disordered region spans residues 15 to 76 (NLHRSPKLAT…KPSIPPLKSE (62 aa)). Positions 43-54 (LGSNVVSHPTRS) are enriched in polar residues. Positions 55–65 (SPEKTTDKPAD) are enriched in basic and acidic residues.

This sequence belongs to the TUBGCP family. As to quaternary structure, component of the gamma-tubulin small complex (gamma-TuSC) composed of tubulin gamma chain, gamma-tubulin complex protein 2 (GCP2) and gamma-tubulin complex protein 3 (GCP3). Interacts with tubulin gamma chain.

Its subcellular location is the cytoplasm. The protein localises to the cytoskeleton. It localises to the flagellum axoneme. The protein resides in the flagellum basal body. Its function is as follows. Component of the gamma-tubulin small complex (gamma-TuSC) involved in microtubule (MT) nucleation for the formation of median bodies and in the biogenesis of flagella. Gamma-TuSC may be required for the correct positioning of EB1 within the trophozoites. This Giardia intestinalis (strain ATCC 50803 / WB clone C6) (Giardia lamblia) protein is Gamma-tubulin small complex component GCP2.